Reading from the N-terminus, the 157-residue chain is Thiocyanate hydrolase subunit beta (157 aa).

In terms of assembly, heterododecamer consisting of 4 alpha, 4 beta, and 4 gamma subunits.

The enzyme catalyses thiocyanate + H2O + 2 H(+) = carbonyl sulfide + NH4(+). It participates in organosulfur degradation; thiocyanate degradation. Functionally, involved in the degradation of thiocyanate. In Thiobacillus thioparus, this protein is Thiocyanate hydrolase subunit beta (scnB).